Here is a 125-residue protein sequence, read N- to C-terminus: Large ribosomal subunit protein bL17 (125 aa).

This sequence belongs to the bacterial ribosomal protein bL17 family. In terms of assembly, part of the 50S ribosomal subunit. Contacts protein L32.

This Acinetobacter baumannii (strain AB0057) protein is Large ribosomal subunit protein bL17.